The primary structure comprises 387 residues: Protochlorophyllide reductase A, chloroplastic (387 aa).

The N-terminal 35 residues, M1–S35, are a transit peptide targeting the chloroplast.

The protein belongs to the short-chain dehydrogenases/reductases (SDR) family. POR subfamily.

The protein resides in the plastid. Its subcellular location is the chloroplast. It catalyses the reaction chlorophyllide a + NADP(+) = protochlorophyllide a + NADPH + H(+). Its pathway is porphyrin-containing compound metabolism; chlorophyll biosynthesis. In terms of biological role, phototransformation of protochlorophyllide (Pchlide) to chlorophyllide (Chlide). The polypeptide is Protochlorophyllide reductase A, chloroplastic (PORA) (Oryza sativa subsp. japonica (Rice)).